The following is a 323-amino-acid chain: tRNA dimethylallyltransferase (323 aa).

12-19 (GPTAAGKT) contributes to the ATP binding site. A substrate-binding site is contributed by 14 to 19 (TAAGKT). Interaction with substrate tRNA regions lie at residues 37–40 (DSAL) and 161–165 (QRLTR).

It belongs to the IPP transferase family. Monomer. The cofactor is Mg(2+).

It catalyses the reaction adenosine(37) in tRNA + dimethylallyl diphosphate = N(6)-dimethylallyladenosine(37) in tRNA + diphosphate. Its function is as follows. Catalyzes the transfer of a dimethylallyl group onto the adenine at position 37 in tRNAs that read codons beginning with uridine, leading to the formation of N6-(dimethylallyl)adenosine (i(6)A). This chain is tRNA dimethylallyltransferase, found in Pseudomonas fluorescens (strain ATCC BAA-477 / NRRL B-23932 / Pf-5).